Reading from the N-terminus, the 408-residue chain is Two-pore potassium channel 5 (408 aa).

Disordered stretches follow at residues 1-29 and 58-82; these read MEPLISPQPRFRLQPIPENPSSSSSSASI and QSVQDDKEDQDSDSDETNRFLSQTR. Residues 15-29 are compositionally biased toward low complexity; that stretch reads PIPENPSSSSSSASI. Residues 22–115 lie on the Stromal side of the membrane; it reads SSSSSASITI…TKKPSPVSKS (94 aa). Over residues 63 to 72 the composition is skewed to acidic residues; it reads DKEDQDSDSD. The helical transmembrane segment at 116-136 threads the bilayer; it reads IIRQAIFLLIVYLTLGVSIYS. Residues 152–171 constitute an intramembrane region (pore-forming); it reads DALYFCIVTMCTIGYGDIAP. A helical transmembrane segment spans residues 178-198; the sequence is IFAVVFVLFGFGFLDILLSGV. At 199-248 the chain is on the stromal side; it reads VNYVLDLQESMILTGIQTRQHHQHHHHHRFSAKDYIIDFEKGRMRIRMKV. Residues 249 to 269 form a helical membrane-spanning segment; that stretch reads CLALCVVVLCIGVGALVLHFV. Positions 276–295 form an intramembrane region, pore-forming; that stretch reads DSVYLSVMSVTTVGYGDRAF. The helical transmembrane segment at 302 to 322 threads the bilayer; it reads LFAAVWLLVSTLAVARAFLYL. Topologically, residues 323 to 408 are stromal; the sequence is AEARIDRRHR…TLPDLLGDPL (86 aa). 2 EF-hand domains span residues 339–374 and 378–408; these read LNREITVDDLLKADTYQHGFISKSEYIVLKLKEMGK and KDIDQVVIQFEKLDPNQIGKITLPDLLGDPL. Residues Asp-352, Glu-363, Asp-391, Asn-393, Lys-397, and Asp-402 each coordinate Ca(2+).

The protein belongs to the two pore domain potassium channel (TC 1.A.1.7) family. Homodimer. As to expression, expressed in hydathodes and the vascular tissues of roots, stems, leaves and flowers.

The protein localises to the vacuole membrane. Its function is as follows. Probable voltage-independent potassium-selective tonoplast ion channel. This Arabidopsis thaliana (Mouse-ear cress) protein is Two-pore potassium channel 5 (TPK5).